A 143-amino-acid chain; its full sequence is Large ribosomal subunit protein uL15 (143 aa).

The interval 1–54 (MELNSIKPADGAKHAARRVGRGIGSGLGKTAGRGHKGQKSRSGGYHKVGFEGGQ) is disordered. Positions 21–31 (RGIGSGLGKTA) are enriched in gly residues.

Belongs to the universal ribosomal protein uL15 family. Part of the 50S ribosomal subunit.

Functionally, binds to the 23S rRNA. This is Large ribosomal subunit protein uL15 from Acidovorax ebreus (strain TPSY) (Diaphorobacter sp. (strain TPSY)).